The primary structure comprises 227 residues: Cytochrome c oxidase subunit 2 (227 aa).

The Mitochondrial intermembrane portion of the chain corresponds to 1-14 (MAYPMQLGFQDATS). The chain crosses the membrane as a helical span at residues 15-45 (PIMEELLHFHDHTLMIVFLISSLVLYIISLM). Over 46–59 (LTTKLTHTSTMDAQ) the chain is Mitochondrial matrix. Residues 60–87 (EVETIWTILPAIILILIALPSLRILYMM) traverse the membrane as a helical segment. The Mitochondrial intermembrane segment spans residues 88 to 227 (DEINNPSLTV…YFEKWSASML (140 aa)). Positions 161, 196, 198, 200, 204, and 207 each coordinate Cu cation. Glutamate 198 contributes to the Mg(2+) binding site. Position 218 is a phosphotyrosine (tyrosine 218).

It belongs to the cytochrome c oxidase subunit 2 family. As to quaternary structure, component of the cytochrome c oxidase (complex IV, CIV), a multisubunit enzyme composed of 14 subunits. The complex is composed of a catalytic core of 3 subunits MT-CO1, MT-CO2 and MT-CO3, encoded in the mitochondrial DNA, and 11 supernumerary subunits COX4I, COX5A, COX5B, COX6A, COX6B, COX6C, COX7A, COX7B, COX7C, COX8 and NDUFA4, which are encoded in the nuclear genome. The complex exists as a monomer or a dimer and forms supercomplexes (SCs) in the inner mitochondrial membrane with NADH-ubiquinone oxidoreductase (complex I, CI) and ubiquinol-cytochrome c oxidoreductase (cytochrome b-c1 complex, complex III, CIII), resulting in different assemblies (supercomplex SCI(1)III(2)IV(1) and megacomplex MCI(2)III(2)IV(2)). Found in a complex with TMEM177, COA6, COX18, COX20, SCO1 and SCO2. Interacts with TMEM177 in a COX20-dependent manner. Interacts with COX20. Interacts with COX16. It depends on Cu cation as a cofactor.

Its subcellular location is the mitochondrion inner membrane. The catalysed reaction is 4 Fe(II)-[cytochrome c] + O2 + 8 H(+)(in) = 4 Fe(III)-[cytochrome c] + 2 H2O + 4 H(+)(out). Component of the cytochrome c oxidase, the last enzyme in the mitochondrial electron transport chain which drives oxidative phosphorylation. The respiratory chain contains 3 multisubunit complexes succinate dehydrogenase (complex II, CII), ubiquinol-cytochrome c oxidoreductase (cytochrome b-c1 complex, complex III, CIII) and cytochrome c oxidase (complex IV, CIV), that cooperate to transfer electrons derived from NADH and succinate to molecular oxygen, creating an electrochemical gradient over the inner membrane that drives transmembrane transport and the ATP synthase. Cytochrome c oxidase is the component of the respiratory chain that catalyzes the reduction of oxygen to water. Electrons originating from reduced cytochrome c in the intermembrane space (IMS) are transferred via the dinuclear copper A center (CU(A)) of subunit 2 and heme A of subunit 1 to the active site in subunit 1, a binuclear center (BNC) formed by heme A3 and copper B (CU(B)). The BNC reduces molecular oxygen to 2 water molecules using 4 electrons from cytochrome c in the IMS and 4 protons from the mitochondrial matrix. In Bison bonasus (European bison), this protein is Cytochrome c oxidase subunit 2 (MT-CO2).